The sequence spans 128 residues: Large ribosomal subunit protein bL21 (128 aa).

The interval 104 to 128 (GKTPTVGPRPKKEKVVEPAEGEGDH) is disordered. The span at 116-128 (EKVVEPAEGEGDH) shows a compositional bias: basic and acidic residues.

It belongs to the bacterial ribosomal protein bL21 family. As to quaternary structure, part of the 50S ribosomal subunit. Contacts protein L20.

Its function is as follows. This protein binds to 23S rRNA in the presence of protein L20. The polypeptide is Large ribosomal subunit protein bL21 (Nitrobacter hamburgensis (strain DSM 10229 / NCIMB 13809 / X14)).